Here is a 150-residue protein sequence, read N- to C-terminus: UPF0506 protein SJCHGC03047 (150 aa).

A signal peptide spans 1 to 18 (MNTCIQLLILCLVTLTNS). N20, N48, and N110 each carry an N-linked (GlcNAc...) asparagine glycan. Disulfide bonds link C116–C130, C123–C134, and C129–C139.

It belongs to the UPF0506 family.

The protein localises to the secreted. The sequence is that of UPF0506 protein SJCHGC03047 from Schistosoma japonicum (Blood fluke).